Consider the following 199-residue polypeptide: Ciliary neurotrophic factor (199 aa).

Belongs to the CNTF family. Nervous system.

Its subcellular location is the cytoplasm. Its function is as follows. CNTF is a survival factor for various neuronal cell types. Seems to prevent the degeneration of motor axons after axotomy. The protein is Ciliary neurotrophic factor (CNTF) of Oryctolagus cuniculus (Rabbit).